A 293-amino-acid chain; its full sequence is Probable endonuclease 4 (293 aa).

Zn(2+) is bound by residues His77, His118, Glu153, Asp187, His190, His221, Asp234, His236, and Glu266.

Belongs to the AP endonuclease 2 family. The cofactor is Zn(2+).

It catalyses the reaction Endonucleolytic cleavage to 5'-phosphooligonucleotide end-products.. Functionally, endonuclease IV plays a role in DNA repair. It cleaves phosphodiester bonds at apurinic or apyrimidinic (AP) sites, generating a 3'-hydroxyl group and a 5'-terminal sugar phosphate. The protein is Probable endonuclease 4 of Mesoplasma florum (strain ATCC 33453 / NBRC 100688 / NCTC 11704 / L1) (Acholeplasma florum).